Consider the following 28-residue polypeptide: U1-poneritoxin-Da4a (28 aa).

At alanine 28 the chain carries Alanine amide.

Expressed by the venom gland.

The protein localises to the secreted. Its function is as follows. Shows a broad spectrum of activity against both Gram-positive and Gram-negative bacteria. Also has antimicrobial activity against S.cerevisiae. Has insecticidal and non-hemolytic activity. The sequence is that of U1-poneritoxin-Da4a from Dinoponera australis (Giant neotropical hunting ant).